Consider the following 183-residue polypeptide: Protein P7 (183 aa).

It is found in the host nucleus. May play a role in inhibition of the host immune system by counteracting the type I interferon response. In Gadus morhua (Atlantic cod), this protein is Protein P7.